A 273-amino-acid polypeptide reads, in one-letter code: Photosystem I chlorophyll a/b-binding protein 3-1, chloroplastic (273 aa).

A chloroplast-targeting transit peptide spans 1-39 (MAAQALVSSSLTSSVQTARQIFGSKPVASASQKKSSFVV). W56 is a chlorophyll b binding site. Chlorophyll a-binding residues include F76, S82, and E100. R105 provides a ligand contact to chlorophyll b. A helical transmembrane segment spans residues 106–126 (FAMLGAAGAIAPEILGKAGLI). I140 serves as a coordination point for chlorophyll b. The chain crosses the membrane as a helical span at residues 146–166 (YTYWADNYTLFVLEMALMGFA). The chlorophyll b site is built by E167 and R170. Phosphoserine is present on S195. Chlorophyll a contacts are provided by K224, E225, N228, R230, Q242, and H257. The chain crosses the membrane as a helical span at residues 231–251 (LAMLAILGYFIQGLVTGVGPY). F272 lines the chlorophyll b pocket.

The protein belongs to the light-harvesting chlorophyll a/b-binding (LHC) protein family. The LHC complex consists of chlorophyll a-b binding proteins. Red-emitting heterodimer with LHCA2. Interacts with LHCA5. Binds to carotenoids. Binds at least 14 chlorophylls (8 Chl-a and 6 Chl-b) and carotenoids such as lutein and neoxanthin. is required as a cofactor. Post-translationally, photoregulated by reversible phosphorylation of its threonine residues.

Its subcellular location is the plastid. The protein resides in the chloroplast thylakoid membrane. The light-harvesting complex (LHC) functions as a light receptor, it captures and delivers excitation energy to photosystems with which it is closely associated, here photosystem I. The chain is Photosystem I chlorophyll a/b-binding protein 3-1, chloroplastic from Arabidopsis thaliana (Mouse-ear cress).